A 565-amino-acid chain; its full sequence is Proline--tRNA ligase (565 aa).

It belongs to the class-II aminoacyl-tRNA synthetase family. ProS type 1 subfamily. In terms of assembly, homodimer.

It localises to the cytoplasm. The enzyme catalyses tRNA(Pro) + L-proline + ATP = L-prolyl-tRNA(Pro) + AMP + diphosphate. In terms of biological role, catalyzes the attachment of proline to tRNA(Pro) in a two-step reaction: proline is first activated by ATP to form Pro-AMP and then transferred to the acceptor end of tRNA(Pro). As ProRS can inadvertently accommodate and process non-cognate amino acids such as alanine and cysteine, to avoid such errors it has two additional distinct editing activities against alanine. One activity is designated as 'pretransfer' editing and involves the tRNA(Pro)-independent hydrolysis of activated Ala-AMP. The other activity is designated 'posttransfer' editing and involves deacylation of mischarged Ala-tRNA(Pro). The misacylated Cys-tRNA(Pro) is not edited by ProRS. This is Proline--tRNA ligase from Hydrogenobaculum sp. (strain Y04AAS1).